The following is a 213-amino-acid chain: Orotate phosphoribosyltransferase (213 aa).

Lys26 is a 5-phospho-alpha-D-ribose 1-diphosphate binding site. 34–35 (FF) lines the orotate pocket. 5-phospho-alpha-D-ribose 1-diphosphate is bound by residues 72-73 (YK), Arg99, Lys100, Lys103, His105, and 124-132 (DDVITAGTA). Thr128 and Arg156 together coordinate orotate.

Belongs to the purine/pyrimidine phosphoribosyltransferase family. PyrE subfamily. As to quaternary structure, homodimer. The cofactor is Mg(2+).

It catalyses the reaction orotidine 5'-phosphate + diphosphate = orotate + 5-phospho-alpha-D-ribose 1-diphosphate. It functions in the pathway pyrimidine metabolism; UMP biosynthesis via de novo pathway; UMP from orotate: step 1/2. Functionally, catalyzes the transfer of a ribosyl phosphate group from 5-phosphoribose 1-diphosphate to orotate, leading to the formation of orotidine monophosphate (OMP). The sequence is that of Orotate phosphoribosyltransferase from Haemophilus influenzae (strain ATCC 51907 / DSM 11121 / KW20 / Rd).